Reading from the N-terminus, the 257-residue chain is Indole-3-glycerol phosphate synthase (257 aa).

It belongs to the TrpC family.

The catalysed reaction is 1-(2-carboxyphenylamino)-1-deoxy-D-ribulose 5-phosphate + H(+) = (1S,2R)-1-C-(indol-3-yl)glycerol 3-phosphate + CO2 + H2O. The protein operates within amino-acid biosynthesis; L-tryptophan biosynthesis; L-tryptophan from chorismate: step 4/5. This Halalkalibacterium halodurans (strain ATCC BAA-125 / DSM 18197 / FERM 7344 / JCM 9153 / C-125) (Bacillus halodurans) protein is Indole-3-glycerol phosphate synthase.